The chain runs to 508 residues: Protein DETOXIFICATION 52 (508 aa).

A run of 12 helical transmembrane segments spans residues 48 to 68, 78 to 98, 122 to 142, 156 to 176, 189 to 209, 222 to 242, 270 to 290, 300 to 320, 341 to 361, 368 to 388, 415 to 437, and 441 to 463; these read ILAALILYARSAISMLFLGHI, LAIAFANITGYSVLAGLALGM, VLFLLTSSVVIVALWLNLGKI, AQTYILCSIPDLLTNSFLHPL, LTLATLAGTIFHIPMNFFLVS, AAASNLLVVIFLVAHVWIAGL, IGVCLEWWWYEIMTVLCGLLI, GILIQTTSLLYIFPSSLGLAV, IVAVSFAGVMGLTASAFAWGV, IFTNDVAIIKLTAAALPILGL, INLGAFYLVGTPVAVGLTFWAAY, and GLWVGLLAAQICCAAMMLYVVAT.

It belongs to the multi antimicrobial extrusion (MATE) (TC 2.A.66.1) family. In terms of tissue distribution, detected in the part of the veins in cotyledons of 6-day-old seedlings and the basal parts of the petioles in older plants. Highly expressed in the vascular tissues of hypocotyl in dark-grown seedlings.

The protein resides in the late endosome membrane. May act as a negative regulator of hypocotyl cell elongation in the light. The polypeptide is Protein DETOXIFICATION 52 (Arabidopsis thaliana (Mouse-ear cress)).